Reading from the N-terminus, the 111-residue chain is Aspartate 1-decarboxylase (111 aa).

S25 acts as the Schiff-base intermediate with substrate; via pyruvic acid in catalysis. S25 carries the post-translational modification Pyruvic acid (Ser). T57 contributes to the substrate binding site. Y58 functions as the Proton donor in the catalytic mechanism. Substrate is bound at residue 73–75 (GPA).

This sequence belongs to the PanD family. As to quaternary structure, heterooctamer of four alpha and four beta subunits. Requires pyruvate as cofactor. Post-translationally, is synthesized initially as an inactive proenzyme, which is activated by self-cleavage at a specific serine bond to produce a beta-subunit with a hydroxyl group at its C-terminus and an alpha-subunit with a pyruvoyl group at its N-terminus.

It localises to the cytoplasm. It carries out the reaction L-aspartate + H(+) = beta-alanine + CO2. It functions in the pathway cofactor biosynthesis; (R)-pantothenate biosynthesis; beta-alanine from L-aspartate: step 1/1. In terms of biological role, catalyzes the pyruvoyl-dependent decarboxylation of aspartate to produce beta-alanine. The sequence is that of Aspartate 1-decarboxylase from Francisella tularensis subsp. tularensis (strain FSC 198).